Here is a 550-residue protein sequence, read N- to C-terminus: Chaperonin GroEL 1 (550 aa).

ATP-binding positions include 29 to 32 (TIGP), 86 to 90 (DGTTT), G413, 477 to 479 (NAA), and D493. Residues 524-550 (AVSDGDHGHSHGHGHSHGHSHPQGPGF) are disordered. Residues 533–543 (SHGHGHSHGHS) show a composition bias toward basic residues.

This sequence belongs to the chaperonin (HSP60) family. As to quaternary structure, forms a cylinder of 14 subunits composed of two heptameric rings stacked back-to-back. Interacts with the co-chaperonin GroES.

The protein resides in the cytoplasm. It catalyses the reaction ATP + H2O + a folded polypeptide = ADP + phosphate + an unfolded polypeptide.. In terms of biological role, together with its co-chaperonin GroES, plays an essential role in assisting protein folding. The GroEL-GroES system forms a nano-cage that allows encapsulation of the non-native substrate proteins and provides a physical environment optimized to promote and accelerate protein folding. The polypeptide is Chaperonin GroEL 1 (Frankia alni (strain DSM 45986 / CECT 9034 / ACN14a)).